Reading from the N-terminus, the 733-residue chain is Polyribonucleotide nucleotidyltransferase (733 aa).

Positions 404-424 are disordered; the sequence is NYNMPPYSTGETGRVGSPKRR. Positions 516 and 522 each coordinate Mg(2+). A KH domain is found at 582–641; that stretch reads PRIITVHIPVDKIGEVIGPKGKMINQIQDDTGANISIEDDGTIFIGADNGDSAESARSMI. Residues 653–725 enclose the S1 motif domain; it reads GERYLGTVVK…DRGKLSLVLA (73 aa).

It belongs to the polyribonucleotide nucleotidyltransferase family. Mg(2+) is required as a cofactor.

It is found in the cytoplasm. It catalyses the reaction RNA(n+1) + phosphate = RNA(n) + a ribonucleoside 5'-diphosphate. Its function is as follows. Involved in mRNA degradation. Catalyzes the phosphorolysis of single-stranded polyribonucleotides processively in the 3'- to 5'-direction. The protein is Polyribonucleotide nucleotidyltransferase of Cutibacterium acnes (strain DSM 16379 / KPA171202) (Propionibacterium acnes).